Here is a 92-residue protein sequence, read N- to C-terminus: DNA-directed RNA polymerase subunit omega (92 aa).

Belongs to the RNA polymerase subunit omega family. The RNAP catalytic core consists of 2 alpha, 1 beta, 1 beta' and 1 omega subunit. When a sigma factor is associated with the core the holoenzyme is formed, which can initiate transcription.

The enzyme catalyses RNA(n) + a ribonucleoside 5'-triphosphate = RNA(n+1) + diphosphate. Its function is as follows. Promotes RNA polymerase assembly. Latches the N- and C-terminal regions of the beta' subunit thereby facilitating its interaction with the beta and alpha subunits. This Shewanella amazonensis (strain ATCC BAA-1098 / SB2B) protein is DNA-directed RNA polymerase subunit omega.